We begin with the raw amino-acid sequence, 510 residues long: Sulfoquinovosyl transferase SQD2 (510 aa).

A chloroplast-targeting transit peptide spans 1–83 (MTTLSSINLS…SNDMTITQVR (83 aa)). Phosphoserine is present on Ser-88. A helical transmembrane segment spans residues 198 to 218 (PGVMVFGALAIAKMLSVPIVM).

Belongs to the glycosyltransferase group 1 family. Glycosyltransferase 4 subfamily.

The protein resides in the plastid. The protein localises to the chloroplast membrane. The catalysed reaction is UDP-alpha-D-6-sulfoquinovose + a 1,2-diacyl-sn-glycerol = a 6-sulfo-alpha-D-quinovosyldiacylglycerol + UDP + H(+). Its pathway is glycolipid biosynthesis. Functionally, catalyzes the transfer of the sulfoquinovose moiety from UDP-sulfoquinovose to diacylglycerol during sulfolipid biosynthesis. Sulfolipid contributes to maintaining a negatively charged lipid-water interface, a requirement for proper function of photosynthetic membranes. Sulfolipid may also function as a substitute of anionic phospholipids under phosphate-limited growth conditions. In Arabidopsis thaliana (Mouse-ear cress), this protein is Sulfoquinovosyl transferase SQD2.